The following is a 455-amino-acid chain: Probable glycine dehydrogenase (decarboxylating) subunit 1 (455 aa).

This sequence belongs to the GcvP family. N-terminal subunit subfamily. In terms of assembly, the glycine cleavage system is composed of four proteins: P, T, L and H. In this organism, the P 'protein' is a heterodimer of two subunits.

It carries out the reaction N(6)-[(R)-lipoyl]-L-lysyl-[glycine-cleavage complex H protein] + glycine + H(+) = N(6)-[(R)-S(8)-aminomethyldihydrolipoyl]-L-lysyl-[glycine-cleavage complex H protein] + CO2. Functionally, the glycine cleavage system catalyzes the degradation of glycine. The P protein binds the alpha-amino group of glycine through its pyridoxal phosphate cofactor; CO(2) is released and the remaining methylamine moiety is then transferred to the lipoamide cofactor of the H protein. The polypeptide is Probable glycine dehydrogenase (decarboxylating) subunit 1 (Francisella philomiragia subsp. philomiragia (strain ATCC 25017 / CCUG 19701 / FSC 153 / O#319-036)).